We begin with the raw amino-acid sequence, 180 residues long: Acireductone dioxygenase 1 (180 aa).

Histidine 82, histidine 84, glutamate 88, and histidine 127 together coordinate Fe(2+). Residues histidine 82, histidine 84, glutamate 88, and histidine 127 each contribute to the Ni(2+) site.

The protein belongs to the acireductone dioxygenase (ARD) family. It depends on Fe(2+) as a cofactor. Ni(2+) serves as cofactor.

The protein resides in the cytoplasm. Its subcellular location is the nucleus. It carries out the reaction 1,2-dihydroxy-5-(methylsulfanyl)pent-1-en-3-one + O2 = 4-methylsulfanyl-2-oxobutanoate + formate + 2 H(+). The catalysed reaction is 1,2-dihydroxy-5-(methylsulfanyl)pent-1-en-3-one + O2 = 3-(methylsulfanyl)propanoate + CO + formate + 2 H(+). Its pathway is amino-acid biosynthesis; L-methionine biosynthesis via salvage pathway; L-methionine from S-methyl-5-thio-alpha-D-ribose 1-phosphate: step 5/6. Catalyzes 2 different reactions between oxygen and the acireductone 1,2-dihydroxy-3-keto-5-methylthiopentene (DHK-MTPene) depending upon the metal bound in the active site. Fe-containing acireductone dioxygenase (Fe-ARD) produces formate and 2-keto-4-methylthiobutyrate (KMTB), the alpha-ketoacid precursor of methionine in the methionine recycle pathway. Ni-containing acireductone dioxygenase (Ni-ARD) produces methylthiopropionate, carbon monoxide and formate, and does not lie on the methionine recycle pathway. The polypeptide is Acireductone dioxygenase 1 (Sorghum bicolor (Sorghum)).